Consider the following 237-residue polypeptide: tRNA (guanine-N(7)-)-methyltransferase (237 aa).

S-adenosyl-L-methionine is bound by residues glutamate 68, glutamate 93, aspartate 120, and aspartate 143. Aspartate 143 is an active-site residue. Residues lysine 147, aspartate 179, and 216–219 (TKFE) contribute to the substrate site.

The protein belongs to the class I-like SAM-binding methyltransferase superfamily. TrmB family.

The enzyme catalyses guanosine(46) in tRNA + S-adenosyl-L-methionine = N(7)-methylguanosine(46) in tRNA + S-adenosyl-L-homocysteine. It participates in tRNA modification; N(7)-methylguanine-tRNA biosynthesis. In terms of biological role, catalyzes the formation of N(7)-methylguanine at position 46 (m7G46) in tRNA. In Shewanella piezotolerans (strain WP3 / JCM 13877), this protein is tRNA (guanine-N(7)-)-methyltransferase.